A 351-amino-acid chain; its full sequence is E3 ubiquitin-protein ligase TRIM63 (351 aa).

The RING-type zinc-finger motif lies at cysteine 23 to arginine 79. The interaction with TTN stretch occupies residues arginine 74–alanine 218. A B box-type zinc finger spans residues glycine 117–leucine 159. Residues cysteine 122, histidine 125, cysteine 145, and histidine 151 each coordinate Zn(2+). A coiled-coil region spans residues serine 189–glutamate 269. Residues leucine 267–glycine 325 form the COS domain. Acidic residues predominate over residues threonine 326 to valine 345. Positions threonine 326–glutamine 351 are disordered.

In terms of assembly, homodimer. Homooligomer and heterooligomer. Interacts with SUMO2, titin/TTN and GMEB1. Interacts with TRIM54 and probably with TRIM55 and TNNI3. Forms a ternary complex with RACK1 and PRKCE. Interacts with CKM. Muscle specific. Selectively expressed in heart and skeletal muscle.

It localises to the cytoplasm. The protein resides in the nucleus. It is found in the myofibril. The protein localises to the sarcomere. Its subcellular location is the m line. It localises to the z line. The catalysed reaction is S-ubiquitinyl-[E2 ubiquitin-conjugating enzyme]-L-cysteine + [acceptor protein]-L-lysine = [E2 ubiquitin-conjugating enzyme]-L-cysteine + N(6)-ubiquitinyl-[acceptor protein]-L-lysine.. Its pathway is protein modification; protein ubiquitination. E3 ubiquitin ligase. Mediates the ubiquitination and subsequent proteasomal degradation of CKM, GMEB1 and HIBADH. Regulates the proteasomal degradation of muscle proteins under amino acid starvation, where muscle protein is catabolized to provide other organs with amino acids. Inhibits de novo skeletal muscle protein synthesis under amino acid starvation. Regulates proteasomal degradation of cardiac troponin I/TNNI3 and probably of other sarcomeric-associated proteins. May play a role in striated muscle atrophy and hypertrophy by regulating an anti-hypertrophic PKC-mediated signaling pathway. May regulate the organization of myofibrils through TTN in muscle cells. The protein is E3 ubiquitin-protein ligase TRIM63 (Trim63) of Rattus norvegicus (Rat).